A 514-amino-acid polypeptide reads, in one-letter code: Na(+)/H(+) antiporter NhaB (514 aa).

A run of 12 helical transmembrane segments spans residues 23–43, 63–83, 97–117, 120–140, 144–164, 202–222, 238–258, 303–323, 357–377, 391–411, 447–467, and 475–495; these read LALI…PFVA, PLLP…TSAA, LLLM…LFIF, LLLS…AAAF, FLDA…FYGI, LMMH…VGEP, FFLR…FTCV, AIIG…VGLI, LTVF…APII, LFYL…VGTI, ATPN…APLI, and VWMA…CVEF.

Belongs to the NhaB Na(+)/H(+) (TC 2.A.34) antiporter family.

The protein resides in the cell inner membrane. The enzyme catalyses 2 Na(+)(in) + 3 H(+)(out) = 2 Na(+)(out) + 3 H(+)(in). Its function is as follows. Na(+)/H(+) antiporter that extrudes sodium in exchange for external protons. The sequence is that of Na(+)/H(+) antiporter NhaB from Citrobacter koseri (strain ATCC BAA-895 / CDC 4225-83 / SGSC4696).